We begin with the raw amino-acid sequence, 155 residues long: Histone H3-like centromeric protein hH3v (155 aa).

Low complexity predominate over residues 1 to 24 (MPPKKGGVTKSKAVSKKAAAVPTP). The segment at 1–56 (MPPKKGGVTKSKAVSKKAAAVPTPKATPPGRRKSRASSVQPGDPVPQGKKRRYRPG) is disordered. The segment at 45–148 (VPQGKKRRYR…IQLARRIRGV (104 aa)) is H3-like.

The protein belongs to the histone H3 family. In terms of assembly, component of centromeric nucleosomes, where DNA is wrapped around a histone octamer core. The octamer contains two molecules each of H2A, H2B, hH3v/CENPA and H4 assembled in one hH3v-H4 heterotetramer and two H2A-H2B heterodimers. Interacts with the inner kinetochore. Ubiquitinated. Is degraded through ubiquitin-mediated proteolysis when not protected by its association to the kinetochore.

It localises to the nucleus. Its subcellular location is the chromosome. The protein localises to the centromere. Its function is as follows. Histone H3-like nucleosomal protein that is specifically found in centromeric nucleosomes. Replaces conventional H3 in the nucleosome core of centromeric chromatin that serves as an assembly site for the inner kinetochore. Required for recruitment and assembly of kinetochore proteins, mitotic progression and chromosome segregation. May serve as an epigenetic mark that propagates centromere identity through replication and cell division. This chain is Histone H3-like centromeric protein hH3v (hH3v), found in Neurospora crassa (strain ATCC 24698 / 74-OR23-1A / CBS 708.71 / DSM 1257 / FGSC 987).